The primary structure comprises 455 residues: Bifunctional protein GlmU (455 aa).

The pyrophosphorylase stretch occupies residues 1–230 (MSNRFAVILA…VEETLGVNDR (230 aa)). UDP-N-acetyl-alpha-D-glucosamine-binding positions include 9 to 12 (LAAG), K23, Q73, and 78 to 79 (GT). D103 is a binding site for Mg(2+). Residues G140, E155, N170, and N228 each contribute to the UDP-N-acetyl-alpha-D-glucosamine site. Position 228 (N228) interacts with Mg(2+). The linker stretch occupies residues 231–251 (VALAQAEQVMKRRINEAWMRK). An N-acetyltransferase region spans residues 252 to 455 (GVTFIDPEQT…KEHYVTKKNN (204 aa)). UDP-N-acetyl-alpha-D-glucosamine-binding residues include R333 and K351. The Proton acceptor role is filled by H363. UDP-N-acetyl-alpha-D-glucosamine-binding residues include Y366 and N377. Residues 386-387 (NY), A423, and R440 each bind acetyl-CoA.

In the N-terminal section; belongs to the N-acetylglucosamine-1-phosphate uridyltransferase family. It in the C-terminal section; belongs to the transferase hexapeptide repeat family. Homotrimer. The cofactor is Mg(2+).

It localises to the cytoplasm. The catalysed reaction is alpha-D-glucosamine 1-phosphate + acetyl-CoA = N-acetyl-alpha-D-glucosamine 1-phosphate + CoA + H(+). The enzyme catalyses N-acetyl-alpha-D-glucosamine 1-phosphate + UTP + H(+) = UDP-N-acetyl-alpha-D-glucosamine + diphosphate. It functions in the pathway nucleotide-sugar biosynthesis; UDP-N-acetyl-alpha-D-glucosamine biosynthesis; N-acetyl-alpha-D-glucosamine 1-phosphate from alpha-D-glucosamine 6-phosphate (route II): step 2/2. Its pathway is nucleotide-sugar biosynthesis; UDP-N-acetyl-alpha-D-glucosamine biosynthesis; UDP-N-acetyl-alpha-D-glucosamine from N-acetyl-alpha-D-glucosamine 1-phosphate: step 1/1. The protein operates within bacterial outer membrane biogenesis; LPS lipid A biosynthesis. Functionally, catalyzes the last two sequential reactions in the de novo biosynthetic pathway for UDP-N-acetylglucosamine (UDP-GlcNAc). The C-terminal domain catalyzes the transfer of acetyl group from acetyl coenzyme A to glucosamine-1-phosphate (GlcN-1-P) to produce N-acetylglucosamine-1-phosphate (GlcNAc-1-P), which is converted into UDP-GlcNAc by the transfer of uridine 5-monophosphate (from uridine 5-triphosphate), a reaction catalyzed by the N-terminal domain. The sequence is that of Bifunctional protein GlmU from Halalkalibacterium halodurans (strain ATCC BAA-125 / DSM 18197 / FERM 7344 / JCM 9153 / C-125) (Bacillus halodurans).